The sequence spans 398 residues: Succinate--CoA ligase [ADP-forming] subunit beta (398 aa).

Positions 9-253 (KELLKSYGVA…EAEEDPKELE (245 aa)) constitute an ATP-grasp domain. ATP-binding positions include Lys-46, 53–55 (GRG), Glu-108, Cys-111, and Glu-116. Mg(2+) is bound by residues Asn-208 and Asp-222. Substrate is bound by residues Asn-273 and 330 to 332 (GIM).

Belongs to the succinate/malate CoA ligase beta subunit family. As to quaternary structure, heterotetramer of two alpha and two beta subunits. Mg(2+) is required as a cofactor.

It catalyses the reaction succinate + ATP + CoA = succinyl-CoA + ADP + phosphate. The enzyme catalyses GTP + succinate + CoA = succinyl-CoA + GDP + phosphate. The protein operates within carbohydrate metabolism; tricarboxylic acid cycle; succinate from succinyl-CoA (ligase route): step 1/1. Functionally, succinyl-CoA synthetase functions in the citric acid cycle (TCA), coupling the hydrolysis of succinyl-CoA to the synthesis of either ATP or GTP and thus represents the only step of substrate-level phosphorylation in the TCA. The beta subunit provides nucleotide specificity of the enzyme and binds the substrate succinate, while the binding sites for coenzyme A and phosphate are found in the alpha subunit. The protein is Succinate--CoA ligase [ADP-forming] subunit beta of Acidiphilium cryptum (strain JF-5).